We begin with the raw amino-acid sequence, 310 residues long: GMP synthase [glutamine-hydrolyzing] subunit B (310 aa).

In terms of domain architecture, GMPS ATP-PPase spans 2–185 (FDPKKFIDEA…LGLPDSIVYR (184 aa)). 29 to 35 (SGGVDSS) provides a ligand contact to ATP.

Heterodimer composed of a glutamine amidotransferase subunit (A) and a GMP-binding subunit (B).

It catalyses the reaction XMP + L-glutamine + ATP + H2O = GMP + L-glutamate + AMP + diphosphate + 2 H(+). The protein operates within purine metabolism; GMP biosynthesis; GMP from XMP (L-Gln route): step 1/1. Catalyzes the synthesis of GMP from XMP. The chain is GMP synthase [glutamine-hydrolyzing] subunit B (guaAB) from Methanocaldococcus jannaschii (strain ATCC 43067 / DSM 2661 / JAL-1 / JCM 10045 / NBRC 100440) (Methanococcus jannaschii).